The chain runs to 82 residues: Small ribosomal subunit protein uS17 (82 aa).

Belongs to the universal ribosomal protein uS17 family. In terms of assembly, part of the 30S ribosomal subunit.

Its function is as follows. One of the primary rRNA binding proteins, it binds specifically to the 5'-end of 16S ribosomal RNA. The protein is Small ribosomal subunit protein uS17 of Nitrobacter winogradskyi (strain ATCC 25391 / DSM 10237 / CIP 104748 / NCIMB 11846 / Nb-255).